Here is a 298-residue protein sequence, read N- to C-terminus: MKLRFQRVALVGKYQAPTSAGMSDSSRDALDGIARFLANEGCEVALEADTAANTGFTDYPALSVERIGLDCDLCLVVGGDGTMLGVGRQLAQYRTPLIGINQGRLGFITDIPLGEYPTVLKPMLRGEYEEDLRPLMRARVMRQGQCVFEALAMNDVVVNRGSTSGMVELRVEVGGHFVSNQRADGLIIASPTGSTAYALSAGGPMLHPTIPGWVLAPIAPHTLSNRPIVLSDSMEVAVEVVSGRDVSANFDMQSLASLQHGDRILVQRSDYRARFLHPRGWNYFATLRKKLRWNEGGY.

The active-site Proton acceptor is aspartate 80. Residues 80 to 81, 154 to 155, arginine 182, aspartate 184, 195 to 200, alanine 219, and glutamine 253 contribute to the NAD(+) site; these read DG, ND, and TAYALS.

This sequence belongs to the NAD kinase family. A divalent metal cation serves as cofactor.

The protein resides in the cytoplasm. The catalysed reaction is NAD(+) + ATP = ADP + NADP(+) + H(+). In terms of biological role, involved in the regulation of the intracellular balance of NAD and NADP, and is a key enzyme in the biosynthesis of NADP. Catalyzes specifically the phosphorylation on 2'-hydroxyl of the adenosine moiety of NAD to yield NADP. The sequence is that of NAD kinase from Paracidovorax citrulli (strain AAC00-1) (Acidovorax citrulli).